The sequence spans 296 residues: Ribosomal RNA small subunit methyltransferase H (296 aa).

S-adenosyl-L-methionine-binding positions include 41–43 (GGH), Asp60, Phe87, Asp103, and Gln110.

It belongs to the methyltransferase superfamily. RsmH family.

The protein resides in the cytoplasm. The enzyme catalyses cytidine(1402) in 16S rRNA + S-adenosyl-L-methionine = N(4)-methylcytidine(1402) in 16S rRNA + S-adenosyl-L-homocysteine + H(+). In terms of biological role, specifically methylates the N4 position of cytidine in position 1402 (C1402) of 16S rRNA. The chain is Ribosomal RNA small subunit methyltransferase H from Synechococcus elongatus (strain ATCC 33912 / PCC 7942 / FACHB-805) (Anacystis nidulans R2).